Consider the following 374-residue polypeptide: 3-isopropylmalate dehydrogenase (374 aa).

Residue 83-96 participates in NAD(+) binding; it reads GPKWDNLPPEIRPE. Arg104, Arg114, Arg142, and Asp231 together coordinate substrate. The Mg(2+) site is built by Asp231, Asp255, and Asp259. Residue 288–300 participates in NAD(+) binding; it reads GSAPDIAGQNKAN.

Belongs to the isocitrate and isopropylmalate dehydrogenases family. LeuB type 1 subfamily. As to quaternary structure, homodimer. Mg(2+) serves as cofactor. Requires Mn(2+) as cofactor.

The protein resides in the cytoplasm. It catalyses the reaction (2R,3S)-3-isopropylmalate + NAD(+) = 4-methyl-2-oxopentanoate + CO2 + NADH. Its pathway is amino-acid biosynthesis; L-leucine biosynthesis; L-leucine from 3-methyl-2-oxobutanoate: step 3/4. In terms of biological role, catalyzes the oxidation of 3-carboxy-2-hydroxy-4-methylpentanoate (3-isopropylmalate) to 3-carboxy-4-methyl-2-oxopentanoate. The product decarboxylates to 4-methyl-2 oxopentanoate. The polypeptide is 3-isopropylmalate dehydrogenase (Carboxydothermus hydrogenoformans (strain ATCC BAA-161 / DSM 6008 / Z-2901)).